We begin with the raw amino-acid sequence, 280 residues long: Phosphatidylglycerol--prolipoprotein diacylglyceryl transferase (280 aa).

4 consecutive transmembrane segments (helical) span residues 26 to 46, 71 to 91, 106 to 126, and 132 to 152; these read LAIH…WFYA, FILW…ILFY, IWNG…AMIL, and GIPV…GLLF. Arginine 154 is an a 1,2-diacyl-sn-glycero-3-phospho-(1'-sn-glycerol) binding site. 3 consecutive transmembrane segments (helical) span residues 193-213, 217-237, and 251-271; these read GLEG…FKAL, GTVT…VEFF, and WLTM…WAVL.

This sequence belongs to the Lgt family.

Its subcellular location is the cell inner membrane. The enzyme catalyses L-cysteinyl-[prolipoprotein] + a 1,2-diacyl-sn-glycero-3-phospho-(1'-sn-glycerol) = an S-1,2-diacyl-sn-glyceryl-L-cysteinyl-[prolipoprotein] + sn-glycerol 1-phosphate + H(+). It participates in protein modification; lipoprotein biosynthesis (diacylglyceryl transfer). Functionally, catalyzes the transfer of the diacylglyceryl group from phosphatidylglycerol to the sulfhydryl group of the N-terminal cysteine of a prolipoprotein, the first step in the formation of mature lipoproteins. In Agrobacterium fabrum (strain C58 / ATCC 33970) (Agrobacterium tumefaciens (strain C58)), this protein is Phosphatidylglycerol--prolipoprotein diacylglyceryl transferase.